The sequence spans 284 residues: Pantothenate synthetase (284 aa).

32–39 (MGALHDGH) serves as a coordination point for ATP. Catalysis depends on H39, which acts as the Proton donor. Q63 provides a ligand contact to (R)-pantoate. Beta-alanine is bound at residue Q63. 149–152 (GEKD) contacts ATP. Residue Q155 coordinates (R)-pantoate. Residues I178 and 186–189 (MSSR) each bind ATP.

The protein belongs to the pantothenate synthetase family. As to quaternary structure, homodimer.

The protein resides in the cytoplasm. It catalyses the reaction (R)-pantoate + beta-alanine + ATP = (R)-pantothenate + AMP + diphosphate + H(+). Its pathway is cofactor biosynthesis; (R)-pantothenate biosynthesis; (R)-pantothenate from (R)-pantoate and beta-alanine: step 1/1. Its function is as follows. Catalyzes the condensation of pantoate with beta-alanine in an ATP-dependent reaction via a pantoyl-adenylate intermediate. The sequence is that of Pantothenate synthetase from Roseobacter denitrificans (strain ATCC 33942 / OCh 114) (Erythrobacter sp. (strain OCh 114)).